Consider the following 139-residue polypeptide: Galactoside-binding soluble lectin 13 (139 aa).

The 133-residue stretch at 6–138 folds into the Galectin domain; that stretch reads VPYKLPVSLS…DISLTSVCVC (133 aa).

As to quaternary structure, homodimer; disulfide-linked. As to expression, detected in adult and fetal spleen, fetal kidney, adult urinary bladder and placenta. Placental expression originates predominantly from the syncytiotrophoblast.

It localises to the cytoplasm. Its subcellular location is the nucleus matrix. Binds beta-galactoside and lactose. Strong inducer of T-cell apoptosis. Has hemagglutinating activity towards chicken erythrocytes. In Homo sapiens (Human), this protein is Galactoside-binding soluble lectin 13 (LGALS13).